Here is a 156-residue protein sequence, read N- to C-terminus: Endoribonuclease YbeY (156 aa).

Zn(2+)-binding residues include H119, H123, and H129.

Belongs to the endoribonuclease YbeY family. Requires Zn(2+) as cofactor.

It localises to the cytoplasm. In terms of biological role, single strand-specific metallo-endoribonuclease involved in late-stage 70S ribosome quality control and in maturation of the 3' terminus of the 16S rRNA. In Buchnera aphidicola subsp. Cinara cedri (strain Cc), this protein is Endoribonuclease YbeY.